We begin with the raw amino-acid sequence, 2323 residues long: C2 domain-containing protein 3 (2323 aa).

Disordered stretches follow at residues 1–27 (MKQR…SPST), 193–215 (RELR…SCRG), 402–426 (WNGL…DLND), 444–509 (SDVG…HTPA), 537–556 (PDSP…PPKP), and 698–745 (KLSS…TKKT). Positions 200-209 (ESSNTQSMIP) are enriched in polar residues. Residue Ser-453 is modified to Phosphoserine. Residues 474 to 483 (KVVESKEQKQ) are compositionally biased toward basic and acidic residues. Residues 504-663 (PGHTPAMSLS…IQSELLSFSS (160 aa)) enclose the C2 1 domain. The segment covering 698–735 (KLSSSTQPAPVSAATSSDTILPETGQDTACTRNPQSSN) has biased composition (polar residues). Position 713 is a phosphoserine (Ser-713). 4 C2 domains span residues 771 to 903 (SCNL…SRLL), 969 to 1131 (QPPV…YRED), 1155 to 1323 (SSGF…TGWY), and 1383 to 1517 (KEEE…TLTI). The span at 1550 to 1574 (EPARELDSMDCSSHSESEQHPRKSD) shows a compositional bias: basic and acidic residues. 2 disordered regions span residues 1550 to 1599 (EPAR…NSAA) and 1798 to 1824 (LAHT…AARH). Residues 1584-1599 (LQTSPTSTQVHGNSAA) show a composition bias toward polar residues. In terms of domain architecture, C2 6 spans 1598-1726 (AAAQVCPAQE…SGFQFICGWY (129 aa)). Phosphoserine is present on Ser-1871. 5 disordered regions span residues 1891 to 1918 (FSSQ…GRQD), 1952 to 2013 (ALTS…GGML), 2074 to 2163 (SEVL…SVGW), 2182 to 2231 (SEAF…EVST), and 2261 to 2323 (SHSP…TEET). Positions 1892 to 1904 (SSQSSPAVSQSQE) are enriched in low complexity. 2 stretches are compositionally biased toward polar residues: residues 1952–1965 (ALTS…SRAV) and 2074–2083 (SEVLSPQPTE). A compositionally biased stretch (low complexity) spans 2110-2125 (AVSPQPAQGSPSQSGV). Residues 2147 to 2158 (PSLTFSEAQEGS) are compositionally biased toward polar residues. A compositionally biased stretch (low complexity) spans 2182–2197 (SEAFSSEFSDSSESFE). Basic and acidic residues predominate over residues 2207–2216 (SKREDYKDSP). Residues 2222–2231 (QVPTGSEVST) show a composition bias toward polar residues.

In terms of assembly, interacts with OFD1; OFD1 may act as a negative regulator of C2CD3. Associates with the BBSome complex. Interacts with IFT88, BBS4 and PCM1.

It is found in the cytoplasm. The protein resides in the cytoskeleton. It localises to the cilium basal body. Its subcellular location is the microtubule organizing center. The protein localises to the centrosome. It is found in the centriole. Functionally, component of the centrioles that acts as a positive regulator of centriole elongation. Promotes assembly of centriolar distal appendage, a structure at the distal end of the mother centriole that acts as an anchor of the cilium, and is required for recruitment of centriolar distal appendages proteins CEP83, SCLT1, CEP89, FBF1 and CEP164. Not required for centriolar satellite integrity or RAB8 activation. Required for primary cilium formation. Required for sonic hedgehog/SHH signaling and for proteolytic processing of GLI3. The sequence is that of C2 domain-containing protein 3 (C2cd3) from Mus musculus (Mouse).